Reading from the N-terminus, the 93-residue chain is YcgL domain-containing protein Swoo_2115 (93 aa).

The region spanning 1 to 85 (MICAVYKSRR…PVVNLLEEHK (85 aa)) is the YcgL domain.

This is YcgL domain-containing protein Swoo_2115 from Shewanella woodyi (strain ATCC 51908 / MS32).